Consider the following 260-residue polypeptide: MDRHSSYFFIWLQLELCAMAVLLTKGEIRCYCDAAHCVATGYMCKSELSACFSRLLDPQNTNSPLTHGCLDSLASTADICRAKQAQNHSGPAMPTLECCHEDMCNYRGLHDVLSPSKSEASGQGNRYQHDSSRNLITKMQELTSSKELWFRAAVIAVPIAGGLILVLLIMLALRMLRSENKRLQDERQQMLSRLHYSFHGHHSKKGQVAKLDLECMVPVSGQENCCLTCDKMRQAELSNEKILSLVHWGMYSGHGKLEFI.

The N-terminal stretch at 1–26 is a signal peptide; it reads MDRHSSYFFIWLQLELCAMAVLLTKG. Over 27–152 the chain is Extracellular; sequence EIRCYCDAAH…TSSKELWFRA (126 aa). N-linked (GlcNAc...) asparagine glycosylation occurs at N87. A helical membrane pass occupies residues 153-173; the sequence is AVIAVPIAGGLILVLLIMLAL. Residues 174 to 260 lie on the Cytoplasmic side of the membrane; sequence RMLRSENKRL…YSGHGKLEFI (87 aa).

It belongs to the BAMBI family.

It localises to the membrane. Its function is as follows. Negatively regulates TGF-beta signaling. This Mus musculus (Mouse) protein is BMP and activin membrane-bound inhibitor homolog (Bambi).